Here is a 141-residue protein sequence, read N- to C-terminus: uncharacterized protein (141 aa).

Residues valine 13–lysine 141 enclose the Ferritin-like diiron domain. Positions 63, 66, 125, and 128 each coordinate Fe cation.

This is an uncharacterized protein from Methanocaldococcus jannaschii (strain ATCC 43067 / DSM 2661 / JAL-1 / JCM 10045 / NBRC 100440) (Methanococcus jannaschii).